Here is a 215-residue protein sequence, read N- to C-terminus: uncharacterized protein (215 aa).

S-adenosyl-L-methionine-binding residues include Gly53, Glu74, and Asp97.

This sequence belongs to the methyltransferase superfamily. YrrT family.

Its function is as follows. Could be a S-adenosyl-L-methionine-dependent methyltransferase. This is an uncharacterized protein from Geobacillus thermodenitrificans (strain NG80-2).